A 450-amino-acid chain; its full sequence is MQSNKMTKETKNVLQRGLENIHHPVSNFIRAQTTSSLFLLFATIIALWWANSDYAQSYQALIHTQLGFFIGDFELKASLKHIINDGLMVIFFFLLGLEIKREVIAGELAQAKNRRMLIICAMGGMVCPALIYSGFNWSLDSQIGWGIPMATDTAFALGVLTMVRKHIPSSLVAFIVGLAIVDDVGAILVIAIFYTQEISLMHLLSACALIGFLGVANYAGVRQPLFYFIIGVAAWWAMLKSGVHPTVAGVTIALTIPAQPKLASGKWLEKAKSIISAIQNKSKNMDVLGNKGHHEQVLKVRDFAERASTPLRRWEDALDLPVVLFILPLFALANAGVVINLSSFIESVQHPVGLGIISGLILGKLIGISGACWFALKFNIGCLPDKVDLNHVIGASLIAGIGFTMSTFIATLGFGDQDTALHVAKTSILLASVLTAILGLLYLRFVSTKA.

The next 11 helical transmembrane spans lie at 35–55 (SSLFLLFATIIALWWANSDYA), 79–99 (LKHIINDGLMVIFFFLLGLEI), 117–137 (LIICAMGGMVCPALIYSGFNW), 143–163 (IGWGIPMATDTAFALGVLTMV), 173–193 (AFIVGLAIVDDVGAILVIAIF), 198–218 (ISLMHLLSACALIGFLGVANY), 224–244 (PLFYFIIGVAAWWAMLKSGVH), 320–340 (LPVVLFILPLFALANAGVVIN), 356–376 (IISGLILGKLIGISGACWFAL), 392–412 (VIGASLIAGIGFTMSTFIATL), and 423–443 (VAKTSILLASVLTAILGLLYL).

This sequence belongs to the NhaA Na(+)/H(+) (TC 2.A.33) antiporter family.

It is found in the cell inner membrane. It catalyses the reaction Na(+)(in) + 2 H(+)(out) = Na(+)(out) + 2 H(+)(in). Its function is as follows. Na(+)/H(+) antiporter that extrudes sodium in exchange for external protons. The polypeptide is Na(+)/H(+) antiporter NhaA 1 (Shewanella denitrificans (strain OS217 / ATCC BAA-1090 / DSM 15013)).